A 101-amino-acid chain; its full sequence is Small ribosomal subunit protein bS18c (101 aa).

The protein belongs to the bacterial ribosomal protein bS18 family. As to quaternary structure, part of the 30S ribosomal subunit.

It localises to the plastid. It is found in the chloroplast. This Nymphaea alba (White water-lily) protein is Small ribosomal subunit protein bS18c.